We begin with the raw amino-acid sequence, 210 residues long: Guanylate kinase (210 aa).

Residues 6–186 (GVILVLSSPS…TADRISNILR (181 aa)) form the Guanylate kinase-like domain. ATP is bound at residue 13 to 20 (SPSGCGKT).

It belongs to the guanylate kinase family.

The protein resides in the cytoplasm. It carries out the reaction GMP + ATP = GDP + ADP. Functionally, essential for recycling GMP and indirectly, cGMP. The polypeptide is Guanylate kinase (Anaplasma phagocytophilum (strain HZ)).